We begin with the raw amino-acid sequence, 730 residues long: Elongation factor 2 (730 aa).

Positions 19–228 (TKIRNIGIVA…TGVSFKDVYD (210 aa)) constitute a tr-type G domain. GTP-binding positions include 28-35 (AHIDHGKT), 94-98 (DTPGH), and 148-151 (NKVD). A Diphthamide modification is found at His-596.

It belongs to the TRAFAC class translation factor GTPase superfamily. Classic translation factor GTPase family. EF-G/EF-2 subfamily.

Its subcellular location is the cytoplasm. Catalyzes the GTP-dependent ribosomal translocation step during translation elongation. During this step, the ribosome changes from the pre-translocational (PRE) to the post-translocational (POST) state as the newly formed A-site-bound peptidyl-tRNA and P-site-bound deacylated tRNA move to the P and E sites, respectively. Catalyzes the coordinated movement of the two tRNA molecules, the mRNA and conformational changes in the ribosome. This is Elongation factor 2 from Methanosarcina barkeri (strain Fusaro / DSM 804).